Consider the following 415-residue polypeptide: Tyrosine--tRNA ligase (415 aa).

Tyrosine 34 provides a ligand contact to L-tyrosine. The short motif at 39–48 is the 'HIGH' region element; the sequence is PTSDSLTVGH. Residues tyrosine 164 and glutamine 168 each contribute to the L-tyrosine site. The 'KMSKS' region motif lies at 225 to 229; that stretch reads KFGKS. Lysine 228 contributes to the ATP binding site. The 67-residue stretch at 348 to 414 folds into the S4 RNA-binding domain; the sequence is IPLSEALVKT…GKKNNSLIIL (67 aa).

This sequence belongs to the class-I aminoacyl-tRNA synthetase family. TyrS type 1 subfamily. As to quaternary structure, homodimer.

It is found in the cytoplasm. It carries out the reaction tRNA(Tyr) + L-tyrosine + ATP = L-tyrosyl-tRNA(Tyr) + AMP + diphosphate + H(+). Its function is as follows. Catalyzes the attachment of tyrosine to tRNA(Tyr) in a two-step reaction: tyrosine is first activated by ATP to form Tyr-AMP and then transferred to the acceptor end of tRNA(Tyr). This is Tyrosine--tRNA ligase from Phytoplasma australiense.